A 399-amino-acid polypeptide reads, in one-letter code: Insertion element IS900 uncharacterized 42 kDa protein (399 aa).

This sequence belongs to the transposase IS1111A/IS1328/IS1533 family.

This Mycobacterium paratuberculosis protein is Insertion element IS900 uncharacterized 42 kDa protein.